The chain runs to 1141 residues: Serine-aspartate repeat-containing protein E (1141 aa).

The N-terminal stretch at 1 to 52 is a signal peptide; the sequence is MINRDNKKAITKKGMISNRLNKFSIRKYTVGTASILVGTTLIFGLGNQEAKA. The YSIRK-G/S signaling motif motif lies at 23-34; that stretch reads FSIRKYTVGTAS. Residues 53–601 are ligand binding A region; sequence AENTSTENAK…GDGTVKPEEK (549 aa). The interval 54–248 is disordered; it reads ENTSTENAKQ…RSTKPVATAP (195 aa). Over residues 61 to 75 the composition is skewed to basic and acidic residues; that stretch reads AKQDDATTSDNKEVV. Over residues 77–90 the composition is skewed to low complexity; it reads ETENNSTTENDSTN. Basic and acidic residues predominate over residues 92–108; that stretch reads IKKETNTDSQPEAKEES. A compositionally biased stretch (low complexity) spans 109–126; that stretch reads TTSSTQQQQNNVTATTET. The segment covering 130 to 145 has biased composition (basic and acidic residues); that stretch reads NIEKENVKPSTDKTAT. Over residues 159-207 the composition is skewed to polar residues; it reads NYTNNDVTTKPSTSEIQTKPTTPQESTNIENSQPQPTPSKVDNQVTDAT. Over residues 216-241 the composition is skewed to basic and acidic residues; the sequence is SKEELKNNPEKLKELVRNDNNTDRST. CNA-B domains are found at residues 602–714, 715–824, and 825–935; these read LYKI…YKEP, KYNL…YKTP, and KYSL…EEDT. Positions 929-1117 are disordered; it reads GYFEEDTSDS…GSENNGSNNA (189 aa). Positions 930-1080 are enriched in acidic residues; the sequence is YFEEDTSDSD…DSDSDSDSDS (151 aa). Residues 1104-1108 carry the LPXTG sorting signal motif; that stretch reads LPETG. Thr1107 is modified (pentaglycyl murein peptidoglycan amidated threonine). Positions 1108–1141 are cleaved as a propeptide — removed by sortase; the sequence is GSENNGSNNATLFGGLFAALGSLLLFGRRKKQNK.

Belongs to the serine-aspartate repeat-containing protein (SDr) family. As to quaternary structure, interacts with host complement factor H/CFAH (via C-terminus). Interacts with host complement regulator C4BPA.

It is found in the secreted. Its subcellular location is the cell wall. In terms of biological role, cell surface-associated calcium-binding protein which plays an important role in adhesion and pathogenesis. Contributes to the resistance to killing by innate immune components in blood and thus attenuates bacterial clearance by interacting with host complement factor H/CFAH and modulating its activity. Inhibits also bacterial opsonization and killing by interacting with host complement regulator C4BPA and thus inhibiting classical complement pathway activation. In Staphylococcus aureus (strain Mu50 / ATCC 700699), this protein is Serine-aspartate repeat-containing protein E (sdrE).